Reading from the N-terminus, the 205-residue chain is Penta-EF hand domain-containing protein 2 (205 aa).

3 EF-hand domains span residues 45 to 75, 76 to 111, and 119 to 141; these read EMQS…GGTP, LGIE…INNL, and DRNF…SGFQ. The Ca(2+) site is built by Asp-54, Asn-56, Ser-58, Thr-60, Glu-65, Asp-89, Asn-91, Asn-93, Gln-95, and Glu-100.

Belongs to the Peflin/Sorcin family. In terms of assembly, in contrast to pefA, does not form homodimers in presence of Ca(2+). May form heterodimers with pefA.

Its subcellular location is the cytoplasm. It is found in the membrane. The sequence is that of Penta-EF hand domain-containing protein 2 (pefB) from Dictyostelium discoideum (Social amoeba).